The chain runs to 310 residues: 4-hydroxythreonine-4-phosphate dehydrogenase (310 aa).

T129 lines the substrate pocket. A divalent metal cation is bound by residues H158, H202, and H250. 3 residues coordinate substrate: K258, N267, and R276.

This sequence belongs to the PdxA family. Homodimer. Requires a divalent metal cation as cofactor.

It is found in the cytoplasm. It catalyses the reaction 4-(phosphooxy)-L-threonine + NAD(+) = 3-amino-2-oxopropyl phosphate + CO2 + NADH. It participates in cofactor biosynthesis; pyridoxine 5'-phosphate biosynthesis; pyridoxine 5'-phosphate from D-erythrose 4-phosphate: step 4/5. Its function is as follows. Catalyzes the NAD(P)-dependent oxidation of 4-(phosphooxy)-L-threonine (HTP) into 2-amino-3-oxo-4-(phosphooxy)butyric acid which spontaneously decarboxylates to form 3-amino-2-oxopropyl phosphate (AHAP). In Hydrogenobaculum sp. (strain Y04AAS1), this protein is 4-hydroxythreonine-4-phosphate dehydrogenase.